A 156-amino-acid chain; its full sequence is Small ribosomal subunit protein uS7 (156 aa).

It belongs to the universal ribosomal protein uS7 family. Part of the 30S ribosomal subunit. Contacts proteins S9 and S11.

In terms of biological role, one of the primary rRNA binding proteins, it binds directly to 16S rRNA where it nucleates assembly of the head domain of the 30S subunit. Is located at the subunit interface close to the decoding center, probably blocks exit of the E-site tRNA. The polypeptide is Small ribosomal subunit protein uS7 (Nitratiruptor sp. (strain SB155-2)).